The primary structure comprises 236 residues: SSTGFSLQAMDSSHVALVALLLRSEGFEHYRCDRNISMGMNLNNMAKMLKCAGNDDIITIKADDGSDTVTFMFESPTQDKISDFEMKLMDIDSEHLGIPEAEYHAIVKMPSSEFARICKDLSSIGDTVVISVTKEGVKFSTKGDIGTANIVCRQNTSVDKPEEATVIEMNEPVSLTFALRYMNSFTKATPLSNTVTISLSNELPVVVEYKIAEMGYVRFYLAPKIEEDEEDTKPQV.

Residues 31-50 (RCDRNISMGMNLNNMAKMLK) mediate DNA binding.

This sequence belongs to the PCNA family.

The protein resides in the nucleus. In terms of biological role, this protein is an auxiliary protein of DNA polymerase delta and is involved in the control of eukaryotic DNA replication by increasing the polymerase's processibility during elongation of the leading strand. This Glycine max (Soybean) protein is Proliferating cell nuclear antigen.